Reading from the N-terminus, the 1038-residue chain is Importin-7 (1038 aa).

Met1 carries the N-acetylmethionine modification. Residues Ala22–His101 enclose the Importin N-terminal domain. The interval Glu881 to Glu910 is disordered. Residues Asn884–Glu910 show a composition bias toward acidic residues. Residue Ser886 is modified to Phosphoserine. A Phosphothreonine modification is found at Thr898. Phosphoserine is present on residues Ser903 and Ser1020.

Belongs to the importin beta family. In terms of assembly, forms a heterodimer with KPNB1. Interacts with histone H1. Interacts with H2A, H2B, H3 and H4 histones. Interacts with SNUPN and XPO1. Interacts with RPS7 and RPL5. Interacts with RPL23A (via BIB domain). Binds directly to nuclear pore complexes. Interacts with SMAD4 and NUP93; translocates SMAD4 to the nucleus through the NPC upon BMP7 stimulation resulting in activation of SMAD4 signaling. Interacts with phosphorylated SMAD2; the interaction facilitates translocation of SMAD2 to the nucleus. Interacts with SRP19. Interacts with RUNX2; the interaction inhibits RUNX2 nuclear translocation in osteoblasts. Interacts with HDAC6, DLX3 and KLF4; the interaction facilitates HDAC6, DLX3 and KLF4 nuclear translocation in dental papilla cells. As to quaternary structure, (Microbial infection) Interacts with HIV-1 reverse transcription complex integrase and rev.

The protein localises to the cytoplasm. It is found in the nucleus. Its function is as follows. Functions in nuclear protein import, either by acting as autonomous nuclear transport receptor or as an adapter-like protein in association with the importin-beta subunit KPNB1. Acting autonomously, is thought to serve itself as receptor for nuclear localization signals (NLS) and to promote translocation of import substrates through the nuclear pore complex (NPC) by an energy requiring, Ran-dependent mechanism. At the nucleoplasmic side of the NPC, Ran binds to importin, the importin/substrate complex dissociates and importin is re-exported from the nucleus to the cytoplasm where GTP hydrolysis releases Ran. The directionality of nuclear import is thought to be conferred by an asymmetric distribution of the GTP- and GDP-bound forms of Ran between the cytoplasm and nucleus. Mediates autonomously the nuclear import of ribosomal proteins RPL23A, RPS7 and RPL5. In association with KPNB1 mediates the nuclear import of H1 histone and the Ran-binding site of IPO7 is not required but synergizes with that of KPNB1 in importin/substrate complex dissociation. Promotes odontoblast differentiation via promoting nuclear translocation of DLX3, KLF4, SMAD2, thereby facilitating the transcription of target genes that play a role in odontoblast differentiation. Facilitates BMP4-induced translocation of SMAD1 to the nucleus and recruitment to the MSX1 gene promoter, thereby promotes the expression of the odontogenic regulator MSX1 in dental mesenchymal cells. Also promotes odontoblast differentiation by facilitating the nuclear translocation of HDAC6 and subsequent repression of RUNX2 expression. Inhibits osteoblast differentiation by inhibiting nuclear translocation of RUNX2 and therefore inhibition of RUNX2 target gene transcription. In vitro, mediates nuclear import of H2A, H2B, H3 and H4 histones. Functionally, (Microbial infection) Mediates the nuclear import of HIV-1 reverse transcription complex (RTC) integrase. Binds and mediates the nuclear import of HIV-1 Rev. This is Importin-7 (IPO7) from Homo sapiens (Human).